Reading from the N-terminus, the 107-residue chain is Iron-binding protein IscA (107 aa).

Cysteine 35, cysteine 99, and cysteine 101 together coordinate Fe cation.

The protein belongs to the HesB/IscA family. Homodimer; may form tetramers and higher multimers. It depends on Fe cation as a cofactor.

Is able to transfer iron-sulfur clusters to apo-ferredoxin. Multiple cycles of [2Fe2S] cluster formation and transfer are observed, suggesting that IscA acts catalytically. Recruits intracellular free iron so as to provide iron for the assembly of transient iron-sulfur cluster in IscU in the presence of IscS, L-cysteine and the thioredoxin reductase system TrxA/TrxB. The protein is Iron-binding protein IscA of Klebsiella pneumoniae subsp. pneumoniae (strain ATCC 700721 / MGH 78578).